A 797-amino-acid chain; its full sequence is Xaa-Pro dipeptidyl-peptidase (797 aa).

Residues Ser-370, Asp-490, and His-521 each act as charge relay system in the active site.

This sequence belongs to the peptidase S15 family. As to quaternary structure, homodimer.

It localises to the cytoplasm. It carries out the reaction Hydrolyzes Xaa-Pro-|- bonds to release unblocked, N-terminal dipeptides from substrates including Ala-Pro-|-p-nitroanilide and (sequentially) Tyr-Pro-|-Phe-Pro-|-Gly-Pro-|-Ile.. In terms of biological role, removes N-terminal dipeptides sequentially from polypeptides having unsubstituted N-termini provided that the penultimate residue is proline. In Lacticaseibacillus casei (strain BL23) (Lactobacillus casei), this protein is Xaa-Pro dipeptidyl-peptidase.